The sequence spans 212 residues: Lipopolysaccharide core heptose(II)-phosphate phosphatase (212 aa).

A signal peptide spans Met-1–Ala-32.

This sequence belongs to the phosphoglycerate mutase family. Ais subfamily.

Its subcellular location is the periplasm. The protein operates within bacterial outer membrane biogenesis; lipopolysaccharide metabolism. Functionally, catalyzes the dephosphorylation of heptose(II) of the outer membrane lipopolysaccharide core. This is Lipopolysaccharide core heptose(II)-phosphate phosphatase from Shigella boydii serotype 4 (strain Sb227).